The following is a 138-amino-acid chain: Ribosome-binding factor A (138 aa).

The protein belongs to the RbfA family. Monomer. Binds 30S ribosomal subunits, but not 50S ribosomal subunits or 70S ribosomes.

Its subcellular location is the cytoplasm. In terms of biological role, one of several proteins that assist in the late maturation steps of the functional core of the 30S ribosomal subunit. Associates with free 30S ribosomal subunits (but not with 30S subunits that are part of 70S ribosomes or polysomes). Required for efficient processing of 16S rRNA. May interact with the 5'-terminal helix region of 16S rRNA. The protein is Ribosome-binding factor A of Sodalis glossinidius (strain morsitans).